Reading from the N-terminus, the 95-residue chain is Large ribosomal subunit protein bL27 (95 aa).

The tract at residues 1–21 (MAHKKGASSSRNGRDSNAQRL) is disordered. Polar residues predominate over residues 7 to 19 (ASSSRNGRDSNAQ).

The protein belongs to the bacterial ribosomal protein bL27 family.

The polypeptide is Large ribosomal subunit protein bL27 (Parafrankia sp. (strain EAN1pec)).